Here is a 199-residue protein sequence, read N- to C-terminus: Holliday junction resolvase RecU (199 aa).

Positions 82, 84, 97, and 116 each coordinate Mg(2+).

This sequence belongs to the RecU family. Mg(2+) serves as cofactor.

It is found in the cytoplasm. It catalyses the reaction Endonucleolytic cleavage at a junction such as a reciprocal single-stranded crossover between two homologous DNA duplexes (Holliday junction).. Functionally, endonuclease that resolves Holliday junction intermediates in genetic recombination. Cleaves mobile four-strand junctions by introducing symmetrical nicks in paired strands. Promotes annealing of linear ssDNA with homologous dsDNA. Required for DNA repair, homologous recombination and chromosome segregation. The polypeptide is Holliday junction resolvase RecU (Streptococcus pyogenes serotype M1).